The primary structure comprises 360 residues: Phospho-N-acetylmuramoyl-pentapeptide-transferase (360 aa).

10 helical membrane passes run Thr-26–Gln-46, Thr-73–Leu-93, Val-98–Leu-118, Leu-136–Val-156, Trp-168–Ser-188, Gly-199–Ser-219, Gly-235–Trp-255, Val-263–Ala-283, Ile-288–Val-308, and Val-338–Lys-358.

Belongs to the glycosyltransferase 4 family. MraY subfamily. Mg(2+) serves as cofactor.

It is found in the cell inner membrane. The enzyme catalyses UDP-N-acetyl-alpha-D-muramoyl-L-alanyl-gamma-D-glutamyl-meso-2,6-diaminopimeloyl-D-alanyl-D-alanine + di-trans,octa-cis-undecaprenyl phosphate = di-trans,octa-cis-undecaprenyl diphospho-N-acetyl-alpha-D-muramoyl-L-alanyl-D-glutamyl-meso-2,6-diaminopimeloyl-D-alanyl-D-alanine + UMP. The protein operates within cell wall biogenesis; peptidoglycan biosynthesis. Its function is as follows. Catalyzes the initial step of the lipid cycle reactions in the biosynthesis of the cell wall peptidoglycan: transfers peptidoglycan precursor phospho-MurNAc-pentapeptide from UDP-MurNAc-pentapeptide onto the lipid carrier undecaprenyl phosphate, yielding undecaprenyl-pyrophosphoryl-MurNAc-pentapeptide, known as lipid I. This is Phospho-N-acetylmuramoyl-pentapeptide-transferase from Halorhodospira halophila (strain DSM 244 / SL1) (Ectothiorhodospira halophila (strain DSM 244 / SL1)).